The following is a 150-amino-acid chain: Cell division protein SepF (150 aa).

Residues 26-45 (DREEIPEEHESKDRTAYQSK) form a disordered region.

It belongs to the SepF family. In terms of assembly, homodimer. Interacts with FtsZ.

Its subcellular location is the cytoplasm. In terms of biological role, cell division protein that is part of the divisome complex and is recruited early to the Z-ring. Probably stimulates Z-ring formation, perhaps through the cross-linking of FtsZ protofilaments. Its function overlaps with FtsA. This Bacillus licheniformis (strain ATCC 14580 / DSM 13 / JCM 2505 / CCUG 7422 / NBRC 12200 / NCIMB 9375 / NCTC 10341 / NRRL NRS-1264 / Gibson 46) protein is Cell division protein SepF.